Here is a 130-residue protein sequence, read N- to C-terminus: Flagellar assembly factor FliW (130 aa).

This sequence belongs to the FliW family. As to quaternary structure, interacts with translational regulator CsrA and flagellin(s).

The protein resides in the cytoplasm. Its function is as follows. Acts as an anti-CsrA protein, binds CsrA and prevents it from repressing translation of its target genes, one of which is flagellin. Binds to flagellin and participates in the assembly of the flagellum. In Borreliella burgdorferi (strain ATCC 35210 / DSM 4680 / CIP 102532 / B31) (Borrelia burgdorferi), this protein is Flagellar assembly factor FliW.